A 309-amino-acid chain; its full sequence is Olfactory receptor 1A1 (309 aa).

Over 1–25 (MRENNQSSTLEFILLGVTGQQEQED) the chain is Extracellular. Asn-5 is a glycosylation site (N-linked (GlcNAc...) asparagine). A helical transmembrane segment spans residues 26–49 (FFYILFLFIYPITLIGNLLIVLAI). At 50 to 57 (CSDVHLHN) the chain is on the cytoplasmic side. A helical transmembrane segment spans residues 58 to 79 (PMYFLLANLSLVDIFFSSVTIP). Residues 80-100 (KMLANHLSGSKSISFGGCLTQ) are Extracellular-facing. Cys-97 and Cys-189 are oxidised to a cystine. The chain crosses the membrane as a helical span at residues 101 to 120 (MYFMIDLGNTDSYTLAAMAY). Topologically, residues 121-139 (DRAVAISRPLHYTTIMSPR) are cytoplasmic. The chain crosses the membrane as a helical span at residues 140-158 (SCIWLIAGSWVIGNANALP). Topologically, residues 159–195 (HTLLTASLSFCGNQEVANFYCDITPLLKLSCSDIHFH) are extracellular. The chain crosses the membrane as a helical span at residues 196–218 (VKMMYLGVGIFSVPLLCIIVSYI). Topologically, residues 219–235 (RVFSTVFQVPSTKGVLK) are cytoplasmic. A helical membrane pass occupies residues 236–258 (AFSTCGSHLTVVSLYYGTVMGMY). Topologically, residues 259–270 (FRPLTNYSLKDA) are extracellular. Asn-264 is a glycosylation site (N-linked (GlcNAc...) asparagine). Residues 271–290 (VITVMCTAVTPMLNPFIYSL) form a helical membrane-spanning segment. At 291–309 (RNRDMKAALQKLFNKRISS) the chain is on the cytoplasmic side.

Belongs to the G-protein coupled receptor 1 family.

It localises to the cell membrane. Its function is as follows. Odorant receptor. This is Olfactory receptor 1A1 (OR1A1) from Gorilla gorilla gorilla (Western lowland gorilla).